The primary structure comprises 94 residues: Large ribosomal subunit protein bL25 (94 aa).

Residues 1–20 form a disordered region; the sequence is MFKFNAEVRQSQGKGASRRL.

This sequence belongs to the bacterial ribosomal protein bL25 family. As to quaternary structure, part of the 50S ribosomal subunit; part of the 5S rRNA/L5/L18/L25 subcomplex. Contacts the 5S rRNA. Binds to the 5S rRNA independently of L5 and L18.

Functionally, this is one of the proteins that binds to the 5S RNA in the ribosome where it forms part of the central protuberance. This chain is Large ribosomal subunit protein bL25, found in Pasteurella multocida (strain Pm70).